A 397-amino-acid chain; its full sequence is Elongation factor Tu 2 (397 aa).

Positions 10 to 206 (KPHVNIGTIG…AIDTWIPEPV (197 aa)) constitute a tr-type G domain. The segment at 19 to 26 (GHVDHGKT) is G1. 19 to 26 (GHVDHGKT) serves as a coordination point for GTP. Mg(2+) is bound at residue threonine 26. The tract at residues 61 to 65 (GITIS) is G2. The segment at 82-85 (DCPG) is G3. Residues 82–86 (DCPGH) and 137–140 (NKCD) each bind GTP. Residues 137 to 140 (NKCD) form a G4 region. Positions 175 to 177 (SAL) are G5.

It belongs to the TRAFAC class translation factor GTPase superfamily. Classic translation factor GTPase family. EF-Tu/EF-1A subfamily. Monomer.

It localises to the cytoplasm. It carries out the reaction GTP + H2O = GDP + phosphate + H(+). GTP hydrolase that promotes the GTP-dependent binding of aminoacyl-tRNA to the A-site of ribosomes during protein biosynthesis. The protein is Elongation factor Tu 2 of Alkaliphilus metalliredigens (strain QYMF).